Here is a 293-residue protein sequence, read N- to C-terminus: Phosphate-binding protein PstS 2 (293 aa).

An N-terminal signal peptide occupies residues 1-23 (MKKHKMLSLLAVSGLMGIGILAG). The N-palmitoyl cysteine moiety is linked to residue Cys24. A lipid anchor (S-diacylglycerol cysteine) is attached at Cys24.

It belongs to the PstS family. As to quaternary structure, the complex is composed of two ATP-binding proteins (PstB), two transmembrane proteins (PstC and PstA) and a solute-binding protein (PstS).

It localises to the cell membrane. Its function is as follows. Part of the ABC transporter complex PstSACB involved in phosphate import. The chain is Phosphate-binding protein PstS 2 (pstS2) from Streptococcus agalactiae serotype III (strain NEM316).